We begin with the raw amino-acid sequence, 385 residues long: Methylthioribose-1-phosphate isomerase (385 aa).

Aspartate 255 serves as the catalytic Proton donor.

It belongs to the eIF-2B alpha/beta/delta subunits family. MtnA subfamily.

The protein localises to the cytoplasm. The protein resides in the nucleus. It carries out the reaction 5-(methylsulfanyl)-alpha-D-ribose 1-phosphate = 5-(methylsulfanyl)-D-ribulose 1-phosphate. Its pathway is amino-acid biosynthesis; L-methionine biosynthesis via salvage pathway; L-methionine from S-methyl-5-thio-alpha-D-ribose 1-phosphate: step 1/6. In terms of biological role, catalyzes the interconversion of methylthioribose-1-phosphate (MTR-1-P) into methylthioribulose-1-phosphate (MTRu-1-P). This is Methylthioribose-1-phosphate isomerase (mri1) from Aspergillus clavatus (strain ATCC 1007 / CBS 513.65 / DSM 816 / NCTC 3887 / NRRL 1 / QM 1276 / 107).